We begin with the raw amino-acid sequence, 193 residues long: Selenate reductase assembly chaperone protein (193 aa).

Belongs to the type II DMSO reductase enzyme chaperone family.

It localises to the cytoplasm. Functionally, may function as a system-specific chaperone protein essential for the assembly of an active selenate reductase SerABC. This chain is Selenate reductase assembly chaperone protein, found in Thauera selenatis.